Reading from the N-terminus, the 288-residue chain is Small ribosomal subunit protein uS2 (288 aa).

Residues 228–288 (RAGLSSDKDA…PAAEAPSTEA (61 aa)) are disordered. Positions 257 to 288 (QAAPAAEAAPAAEAQAAPAAEAPAAEAPSTEA) are enriched in low complexity.

The protein belongs to the universal ribosomal protein uS2 family.

The chain is Small ribosomal subunit protein uS2 from Rhodococcus opacus (strain B4).